The following is a 134-amino-acid chain: Profilin (134 aa).

It belongs to the profilin family. In terms of assembly, occurs in many kinds of cells as a complex with monomeric actin in a 1:1 ratio.

The protein resides in the cytoplasm. The protein localises to the cytoskeleton. Functionally, binds to actin and affects the structure of the cytoskeleton. At high concentrations, profilin prevents the polymerization of actin, whereas it enhances it at low concentrations. By binding to PIP2, it inhibits the formation of IP3 and DG. The polypeptide is Profilin (Apium graveolens (Celery)).